Reading from the N-terminus, the 114-residue chain is MDIIKAIEQEQLKKDVPDFSIGDYVRVNVKVKEGNRERIQAFEGTVIAKKGSGISETFTVRKISYGVGVERIFPVHSPRVAGIEVIRKGKVRRAKLYYLRERVGKSAKVKTKLE.

Belongs to the bacterial ribosomal protein bL19 family.

Its function is as follows. This protein is located at the 30S-50S ribosomal subunit interface and may play a role in the structure and function of the aminoacyl-tRNA binding site. The chain is Large ribosomal subunit protein bL19 from Acetivibrio thermocellus (strain ATCC 27405 / DSM 1237 / JCM 9322 / NBRC 103400 / NCIMB 10682 / NRRL B-4536 / VPI 7372) (Clostridium thermocellum).